A 205-amino-acid chain; its full sequence is tRNA (guanine-N(7)-)-methyltransferase (205 aa).

Positions 34, 59, 86, and 107 each coordinate S-adenosyl-L-methionine. Residue Asp107 is part of the active site. Substrate is bound at residue Lys111. An interaction with RNA region spans residues 113–118 (RHEKRR). Residues Asp144 and 182–185 (TGYE) contribute to the substrate site.

It belongs to the class I-like SAM-binding methyltransferase superfamily. TrmB family.

The enzyme catalyses guanosine(46) in tRNA + S-adenosyl-L-methionine = N(7)-methylguanosine(46) in tRNA + S-adenosyl-L-homocysteine. It participates in tRNA modification; N(7)-methylguanine-tRNA biosynthesis. Catalyzes the formation of N(7)-methylguanine at position 46 (m7G46) in tRNA. The chain is tRNA (guanine-N(7)-)-methyltransferase from Mycoplasmopsis synoviae (strain 53) (Mycoplasma synoviae).